Here is a 206-residue protein sequence, read N- to C-terminus: Thymidylate kinase (206 aa).

Residue 10 to 17 (GIDGAGKS) coordinates ATP.

Belongs to the thymidylate kinase family.

It carries out the reaction dTMP + ATP = dTDP + ADP. In terms of biological role, phosphorylation of dTMP to form dTDP in both de novo and salvage pathways of dTTP synthesis. This is Thymidylate kinase from Neisseria meningitidis serogroup C / serotype 2a (strain ATCC 700532 / DSM 15464 / FAM18).